The sequence spans 285 residues: Undecaprenyl-diphosphatase (285 aa).

The next 7 membrane-spanning stretches (helical) occupy residues 12–34, 49–69, 93–113, 120–140, 159–179, 234–254, and 263–283; these read IVIA…HAVI, IFLP…LVYF, IHIL…GGLL, LFGT…LLLL, LTYA…LPGI, VATI…AFLM, and WALS…FFIL.

Belongs to the UppP family.

The protein resides in the cell inner membrane. The enzyme catalyses di-trans,octa-cis-undecaprenyl diphosphate + H2O = di-trans,octa-cis-undecaprenyl phosphate + phosphate + H(+). In terms of biological role, catalyzes the dephosphorylation of undecaprenyl diphosphate (UPP). Confers resistance to bacitracin. This Gluconacetobacter diazotrophicus (strain ATCC 49037 / DSM 5601 / CCUG 37298 / CIP 103539 / LMG 7603 / PAl5) protein is Undecaprenyl-diphosphatase.